The sequence spans 135 residues: Salivary protein 15 (135 aa).

An N-terminal signal peptide occupies residues Met-1 to Ala-21. Residue Asn-22 is glycosylated (N-linked (GlcNAc...) asparagine). Residues Pro-48–Asp-67 are required for Borrelia OspC-binding. 2 N-linked (GlcNAc...) asparagine glycosylation sites follow: Asn-92 and Asn-104. A CD4-binding region spans residues Gly-116–Cys-135.

The protein belongs to the salp15 family. In terms of assembly, monomer. Interacts with host CD4. Interacts with host DC-SIGN (CD209). As to quaternary structure, (Microbial infection) Interacts with Borrelia outer surface protein C (OspC). Glycosylated. As to expression, expressed in salivary glands. Detected in host skin, at the site of natural inoculation.

The protein localises to the secreted. Functionally, salivary tick protein that downregulates host immune system by binding to both dendritic cells, and CD4(+) T cells. Specifically binds to the CD4 coreceptor on T cells. This interaction prevents the activation of the Src kinase, Lck, and its downstream substrate Zap-70, and results in deficient activation of PLCgamma1, the repression of calcium fluxes triggered by T-cell antigen receptor (TCR) ligation, and a subsequent reduction in interleukin-2 production. This salivary protein also binds to DC-SIGN (CD209) on dendritic cells (DC) and activates the Raf-1 kinase/MEK signaling pathway that results in down-regulating expression of pro-inflammatory cytokines. Furthermore, it inhibits T cell proliferation induced by DCs. It also inhibits in vitro keratinocyte inflammation induced by Borrelia burgdorferi or by the major outer surface protein (OspC) of Borrelia. In addition, it downregulates chemokines and monocyte chemoattractant protein 1, as well as several antimicrobial peptides such as defensins, cathelicidin, psoriasin, and RNase 7. Apart from its immunomodulatory activities, it is also associated with protection of Borrelia spirochetes from antibody-mediated killing through its binding to OspC. In vivo, tests on different immune disease animal models show promising therapeutic results, e.g., in inhibiting HIV infection, experimental autoimmune encephalomyelitis, transplantation rejection, and asthma. Its function is as follows. (Microbial infection) Protects Borrelia garinii (strains A87S and VSBP) from host complement-mediated killing. (Microbial infection) Partially protects Borrelia burgdorferi (strains VS215 and B31) from host complement-mediated killing. This Ixodes scapularis (Black-legged tick) protein is Salivary protein 15.